Consider the following 477-residue polypeptide: Bifunctional enzyme PyrF/PyrE (477 aa).

Residues 1–273 (MIFFDKLHQN…ITVRDVASCS (273 aa)) are OMP decarboxylase. Catalysis depends on lysine 96, which acts as the Proton donor. Positions 274–477 (VWLPDVFTVK…DEQFLALTAE (204 aa)) are orotate phosphoribosyltransferase. Residues arginine 374, lysine 375, lysine 378, histidine 380, and 400-408 (DDILISGKS) contribute to the 5-phospho-alpha-D-ribose 1-diphosphate site.

It in the N-terminal section; belongs to the OMP decarboxylase family. Type 2 subfamily. In the C-terminal section; belongs to the purine/pyrimidine phosphoribosyltransferase family. The cofactor is Mg(2+).

The catalysed reaction is orotidine 5'-phosphate + H(+) = UMP + CO2. The enzyme catalyses orotidine 5'-phosphate + diphosphate = orotate + 5-phospho-alpha-D-ribose 1-diphosphate. Its pathway is pyrimidine metabolism; UMP biosynthesis via de novo pathway; UMP from orotate: step 1/2. It functions in the pathway pyrimidine metabolism; UMP biosynthesis via de novo pathway; UMP from orotate: step 2/2. Functionally, catalyzes the transfer of a ribosyl phosphate group from 5-phosphoribose 1-diphosphate to orotate, leading to the formation of orotidine monophosphate (OMP). Catalyzes the decarboxylation of orotidine monophosphate (OMP) to uridine monophosphate (UMP). In Nostoc sp. (strain PCC 7120 / SAG 25.82 / UTEX 2576), this protein is Bifunctional enzyme PyrF/PyrE (pyrFE).